We begin with the raw amino-acid sequence, 477 residues long: Monocarboxylate transporter 12-B (477 aa).

The Cytoplasmic portion of the chain corresponds to 1 to 9; that stretch reads MAQEKKKGG. A run of 12 helical transmembrane segments spans residues 10-30, 58-78, 86-106, 116-136, 148-168, 178-198, 253-273, 289-309, 320-340, 344-364, 383-403, and 413-433; these read VLPP…VVTV, AWIH…GSLI, IAVI…SFAT, GLLT…MVGI, IAMS…QLLI, LILG…RPII, FLVL…PFVY, AFLM…FGWL, NICY…IPLL, VWLV…VALI, VVYF…GWLV, and FFLS…VAII. Residues 434 to 477 are Cytoplasmic-facing; the sequence is RYCQRNQKKNSLSKIPKLVSCEGKQVDYYPPKNKDLMLIIPATS.

It belongs to the major facilitator superfamily. Monocarboxylate porter (TC 2.A.1.13) family.

The protein resides in the cell membrane. Its subcellular location is the basolateral cell membrane. The catalysed reaction is creatine(in) = creatine(out). It carries out the reaction guanidinoacetate(in) = guanidinoacetate(out). Its function is as follows. Functions as a transporter for creatine and as well for its precursor guanidinoacetate. Transport of creatine and GAA is independent of resting membrane potential and extracellular Na(+), Cl(-), or pH. Contributes to the process of creatine biosynthesis and distribution. This chain is Monocarboxylate transporter 12-B (slc16a12b), found in Danio rerio (Zebrafish).